Here is a 423-residue protein sequence, read N- to C-terminus: Probable sucrose-phosphatase 1 (423 aa).

It belongs to the sucrose phosphatase family. Homodimer. The cofactor is Mg(2+).

The catalysed reaction is sucrose 6(F)-phosphate + H2O = sucrose + phosphate. It functions in the pathway glycan biosynthesis; sucrose biosynthesis; sucrose from D-fructose 6-phosphate and UDP-alpha-D-glucose: step 2/2. In terms of biological role, catalyzes the final step of sucrose synthesis. In Arabidopsis thaliana (Mouse-ear cress), this protein is Probable sucrose-phosphatase 1 (SPP1).